The primary structure comprises 455 residues: Putative RNA polymerase II subunit B1 CTD phosphatase rpap-2 (455 aa).

The segment at 36 to 121 adopts an RTR1-type zinc-finger fold; sequence EHLPHLHCLG…LDEHPLWITG (86 aa). Zn(2+) contacts are provided by Cys59, Cys64, Cys97, and Cys101.

This sequence belongs to the RPAP2 family.

It is found in the nucleus. The enzyme catalyses O-phospho-L-seryl-[protein] + H2O = L-seryl-[protein] + phosphate. It catalyses the reaction O-phospho-L-threonyl-[protein] + H2O = L-threonyl-[protein] + phosphate. Putative RNA polymerase II subunit B1 C-terminal domain (CTD) phosphatase involved in RNA polymerase II transcription regulation. In Caenorhabditis elegans, this protein is Putative RNA polymerase II subunit B1 CTD phosphatase rpap-2.